The primary structure comprises 562 residues: Arginine--tRNA ligase (562 aa).

A 'HIGH' region motif is present at residues Pro121–His131.

The protein belongs to the class-I aminoacyl-tRNA synthetase family. As to quaternary structure, monomer.

Its subcellular location is the cytoplasm. The enzyme catalyses tRNA(Arg) + L-arginine + ATP = L-arginyl-tRNA(Arg) + AMP + diphosphate. This Streptococcus uberis (strain ATCC BAA-854 / 0140J) protein is Arginine--tRNA ligase.